Consider the following 772-residue polypeptide: Cadherin-19 (772 aa).

Residues 1–21 (MNCYLLLRFMLGIPLLWPCLG) form the signal peptide. Positions 22-43 (ATENSQTKKVKQPVRSHLRVKR) are excised as a propeptide. Cadherin domains follow at residues 44-148 (GWVW…EPKF), 149-256 (LDEP…KPIF), 257-370 (KESL…PPLF), 371-470 (LLPY…APEF), and 470-581 (FSQY…STQT). Topologically, residues 44 to 596 (GWVWNQFFVP…LVLSMGFKTE (553 aa)) are extracellular. Residues N57 and N74 are each glycosylated (N-linked (GlcNAc...) asparagine). N-linked (GlcNAc...) asparagine glycans are attached at residues N419, N437, N508, N515, N516, and N534. The chain crosses the membrane as a helical span at residues 597 to 617 (VIIAILICIMIIFGFIFLTLG). Residues 618–772 (LKQRRKQILF…MFGSAVQSNN (155 aa)) lie on the Cytoplasmic side of the membrane.

As to expression, expressed in many tissues, with the exception of uterus.

It is found in the cell membrane. In terms of biological role, cadherins are calcium-dependent cell adhesion proteins. They preferentially interact with themselves in a homophilic manner in connecting cells; cadherins may thus contribute to the sorting of heterogeneous cell types. The protein is Cadherin-19 (CDH19) of Homo sapiens (Human).